Consider the following 297-residue polypeptide: Malonyl-[acyl-carrier protein] O-methyltransferase (297 aa).

This sequence belongs to the methyltransferase superfamily.

The catalysed reaction is malonyl-[ACP] + S-adenosyl-L-methionine = malonyl-[ACP] methyl ester + S-adenosyl-L-homocysteine. It participates in cofactor biosynthesis; biotin biosynthesis. Converts the free carboxyl group of a malonyl-thioester to its methyl ester by transfer of a methyl group from S-adenosyl-L-methionine (SAM). It allows to synthesize pimeloyl-ACP via the fatty acid synthetic pathway. This is Malonyl-[acyl-carrier protein] O-methyltransferase from Laribacter hongkongensis (strain HLHK9).